The chain runs to 196 residues: Beta-crystallin A4 (196 aa).

An N-acetylthreonine modification is found at Thr-2. Positions 2-11 (TLQCTKSAGP) are N-terminal arm. 2 Beta/gamma crystallin 'Greek key' domains span residues 12–51 (WKMV…KVLS) and 52–98 (GAWV…RPAA). Residues 99 to 104 (CANHRD) form a connecting peptide region. 2 Beta/gamma crystallin 'Greek key' domains span residues 105–146 (SRLT…HVHS) and 147–195 (GAWV…RRIQ).

This sequence belongs to the beta/gamma-crystallin family. In terms of assembly, homo/heterodimer, or complexes of higher-order. The structure of beta-crystallin oligomers seems to be stabilized through interactions between the N-terminal arms.

Its function is as follows. Crystallins are the dominant structural components of the vertebrate eye lens. This is Beta-crystallin A4 (CRYBA4) from Homo sapiens (Human).